Reading from the N-terminus, the 479-residue chain is Glutathione gamma-glutamylcysteinyltransferase 3 (479 aa).

Positions 1–221 (MASAGLYRRV…GYMIISKLKR (221 aa)) constitute a Peptidase C83 domain. Residues Cys-56, His-162, and Asp-180 contribute to the active site.

Belongs to the phytochelatin synthase family. As to expression, expressed in roots, nodules and leaves.

It carries out the reaction [Glu(-Cys)](n)-Gly + glutathione + H(+) = [Glu(-Cys)](n+1)-Gly + glycine. Its activity is regulated as follows. Requires cadmium for activity. In terms of biological role, involved in the synthesis of phytochelatins (PC) and homophytochelatins (hPC), the heavy-metal-binding peptides of plants. The sequence is that of Glutathione gamma-glutamylcysteinyltransferase 3 (PCS3) from Lotus japonicus (Lotus corniculatus var. japonicus).